Consider the following 295-residue polypeptide: Glutamyl-Q tRNA(Asp) synthetase (295 aa).

L-glutamate is bound by residues 9–13 (RFAPT) and glutamate 45. The short motif at 12–22 (PTPSGFLHFGS) is the 'HIGH' region element. Cysteine 101, cysteine 103, tyrosine 115, and cysteine 119 together coordinate Zn(2+). Residues tyrosine 172 and arginine 190 each coordinate L-glutamate. Residues 228–232 (KLGKS) carry the 'KMSKS' region motif. Residue lysine 231 coordinates ATP.

It belongs to the class-I aminoacyl-tRNA synthetase family. GluQ subfamily. Zn(2+) is required as a cofactor.

Catalyzes the tRNA-independent activation of glutamate in presence of ATP and the subsequent transfer of glutamate onto a tRNA(Asp). Glutamate is transferred on the 2-amino-5-(4,5-dihydroxy-2-cyclopenten-1-yl) moiety of the queuosine in the wobble position of the QUC anticodon. The protein is Glutamyl-Q tRNA(Asp) synthetase of Pseudomonas entomophila (strain L48).